The sequence spans 294 residues: NADH-cytochrome b5 reductase 1 (294 aa).

Residues 18-38 form a helical membrane-spanning segment; it reads PFIVFATVATIISAFIGYYFL. An FAD-binding FR-type domain is found at 51–154; sequence DEFQKFPLIE…RGPKGFFTYT (104 aa). Residues 134–149 and 160–192 each bind FAD; these read AGKN…GPKG and SFGM…KIHL.

It belongs to the flavoprotein pyridine nucleotide cytochrome reductase family. As to quaternary structure, monomer. Component of the 2-(3-amino-3-carboxypropyl)histidine synthase complex composed of DPH1, DPH2, DPH3 and a NADH-dependent reductase, predominantly CBR1. It depends on FAD as a cofactor.

It is found in the mitochondrion outer membrane. It carries out the reaction 2 Fe(III)-[cytochrome b5] + NADH = 2 Fe(II)-[cytochrome b5] + NAD(+) + H(+). The catalysed reaction is 2 Fe(3+)-[Dph3] + NADH = 2 Fe(2+)-[Dph3] + NAD(+) + H(+). It functions in the pathway protein modification; peptidyl-diphthamide biosynthesis. NADH-dependent reductase for DPH3 and cytochrome b5. Required for the first step of diphthamide biosynthesis, a post-translational modification of histidine which occurs in elongation factor 2. DPH1 and DPH2 transfer a 3-amino-3-carboxypropyl (ACP) group from S-adenosyl-L-methionine (SAM) to a histidine residue, the reaction is assisted by a reduction system comprising DPH3 and a NADH-dependent reductase, predominantly CBR1. By reducing DPH3, also involved in the formation of the tRNA wobble base modification mcm5s 2U (5-methoxycarbonylmethyl-2-thiouridine), mediated by the elongator complex. The cytochrome b5/NADH cytochrome b5 reductase electron transfer system supports the catalytic activity of several sterol biosynthetic enzymes. This is NADH-cytochrome b5 reductase 1 (CBR1) from Candida albicans (strain SC5314 / ATCC MYA-2876) (Yeast).